The following is a 538-amino-acid chain: Chaperonin GroEL (538 aa).

ATP contacts are provided by residues 30-33, 87-91, Gly415, 479-481, and Asp495; these read TLGP, DGTTT, and DAA.

The protein belongs to the chaperonin (HSP60) family. In terms of assembly, forms a cylinder of 14 subunits composed of two heptameric rings stacked back-to-back. Interacts with the co-chaperonin GroES.

Its subcellular location is the cytoplasm. It carries out the reaction ATP + H2O + a folded polypeptide = ADP + phosphate + an unfolded polypeptide.. Its function is as follows. Together with its co-chaperonin GroES, plays an essential role in assisting protein folding. The GroEL-GroES system forms a nano-cage that allows encapsulation of the non-native substrate proteins and provides a physical environment optimized to promote and accelerate protein folding. The polypeptide is Chaperonin GroEL (Dictyoglomus thermophilum (strain ATCC 35947 / DSM 3960 / H-6-12)).